The primary structure comprises 327 residues: E3 ubiquitin ligase Rnf121 (327 aa).

Transmembrane regions (helical) follow at residues 50 to 70 (MHAEMVLILIATLVVAQLLLV), 79 to 96 (SYNMVTLFQMWIVPVYFT), 99 to 119 (LHWWRFLGIWIVFSIITAYIT), 148 to 168 (ATGIVGYIAVMFTLFGLNLLF), and 173 to 193 (EDAMDFGISLLFYGLYYGVLG). The RING-type; atypical zinc-finger motif lies at 226–276 (CAVCGQQIFVDVNEEGIIENTYRLSCNHVFHEFCIRGWCIVGKKQTCPYCK).

It belongs to the RNF121 family.

The protein localises to the endoplasmic reticulum membrane. The enzyme catalyses S-ubiquitinyl-[E2 ubiquitin-conjugating enzyme]-L-cysteine + [acceptor protein]-L-lysine = [E2 ubiquitin-conjugating enzyme]-L-cysteine + N(6)-ubiquitinyl-[acceptor protein]-L-lysine.. It functions in the pathway protein modification; protein ubiquitination. In terms of biological role, E3 ubiquitin ligase which accepts ubiquitin and transfers it to substrates thereby promoting their degradation by the endoplasmic reticulum-associated degradation (ERAD) pathway which is a pathway involved in ubiquitin-dependent degradation of misfolded endoplasmic reticulum proteins. May regulate the unfolded protein response to reduce endoplasmic reticulum stress. This is E3 ubiquitin ligase Rnf121 (rnf121) from Xenopus laevis (African clawed frog).